A 795-amino-acid chain; its full sequence is Protein ROOT HAIR DEFECTIVE 3 homolog 1 (795 aa).

The Cytoplasmic portion of the chain corresponds to 1-682; that stretch reads MDADKSEGCC…EANRRGNNWL (682 aa). The GB1/RHD3-type G domain maps to 39-254; it reads GLSYAVVSIM…IAPGGLAGDR (216 aa). 49-56 is a GTP binding site; the sequence is GPQSSGKS. Positions 218 to 244 form a coiled coil; sequence VALSSYEEKEEQFKEQIASLRQRFMHS. A helical membrane pass occupies residues 683–703; that stretch reads PPPWAILALIVLGFNEFMTLL. The Lumenal segment spans residues 704–706; that stretch reads RNP. The chain crosses the membrane as a helical span at residues 707-727; the sequence is LYLGVMFVAFLLAKALWTQLD. At 728–795 the chain is on the cytoplasmic side; sequence IPGEFRNGAL…PDHKSSSKED (68 aa). A disordered region spans residues 761–795; the sequence is QGEDPPAANPENRRSSNNTSSSENPPDHKSSSKED. Residues 775-784 show a composition bias toward low complexity; that stretch reads SSNNTSSSEN. Residues 785–795 show a composition bias toward basic and acidic residues; it reads PPDHKSSSKED.

Belongs to the TRAFAC class dynamin-like GTPase superfamily. GB1/RHD3 GTPase family. RHD3 subfamily. In terms of tissue distribution, specifically expressed in flowers.

It is found in the endoplasmic reticulum membrane. Its function is as follows. Probable GTP-binding protein that may be involved in cell development. The polypeptide is Protein ROOT HAIR DEFECTIVE 3 homolog 1 (Arabidopsis thaliana (Mouse-ear cress)).